A 295-amino-acid chain; its full sequence is Structure-specific endonuclease subunit SLX1 (295 aa).

The 83-residue stretch at 11–93 folds into the GIY-YIG domain; sequence EFYGVYILQS…QHPKTSRHMA (83 aa). Positions 85 to 133 are disordered; that stretch reads HPKTSRHMAGGGGSVTATAETAKSAPVAGKSDATSPAKNRRNAAPVARS. An SLX1-type zinc finger spans residues 205-272; the sequence is CCLCSDAIDY…IPSDVSCSQC (68 aa).

The protein belongs to the SLX1 family. In terms of assembly, forms a heterodimer with SLX4. Requires a divalent metal cation as cofactor.

The protein resides in the nucleus. Catalytic subunit of the SLX1-SLX4 structure-specific endonuclease that resolves DNA secondary structures generated during DNA repair and recombination. Has endonuclease activity towards branched DNA substrates, introducing single-strand cuts in duplex DNA close to junctions with ss-DNA. The chain is Structure-specific endonuclease subunit SLX1 from Meyerozyma guilliermondii (strain ATCC 6260 / CBS 566 / DSM 6381 / JCM 1539 / NBRC 10279 / NRRL Y-324) (Yeast).